A 93-amino-acid polypeptide reads, in one-letter code: uncharacterized protein (93 aa).

The N-terminal stretch at 1-22 is a signal peptide; that stretch reads MSIPNLSSVTQLLSIATGLVST. Asparagine 5 is a glycosylation site (N-linked (GlcNAc...) asparagine; by host).

This is an uncharacterized protein from Invertebrate iridescent virus 6 (IIV-6).